The chain runs to 144 residues: MGRRDSGRAVAQRYRGVTRGVTVIACLMVVCACVGLCDATGQKRHSWEAPGCHLVGHTRVVRIPDCVPFQITTNACRGFCVSYAIPSPYQTLVYNPNHIITSRAACCDIIDTLDIPVQVTCVDGVREIVFKSARSCACSICRRE.

The signal sequence occupies residues 1 to 41 (MGRRDSGRAVAQRYRGVTRGVTVIACLMVVCACVGLCDATG). Disulfide bonds link Cys52/Cys107, Cys66/Cys121, Cys76/Cys136, and Cys80/Cys138.

It belongs to the glycoprotein hormones subunit alpha family. In terms of assembly, heterodimer with GPHB5; non-covalently-linked. Expressed by the venom duct.

The protein localises to the secreted. This is Thyrostimulin alpha-2 subunit from Conus victoriae (Queen Victoria cone).